The following is a 171-amino-acid chain: Ribosome maturation factor RimP (171 aa).

The protein belongs to the RimP family.

The protein resides in the cytoplasm. Its function is as follows. Required for maturation of 30S ribosomal subunits. This chain is Ribosome maturation factor RimP, found in Oleidesulfovibrio alaskensis (strain ATCC BAA-1058 / DSM 17464 / G20) (Desulfovibrio alaskensis).